A 299-amino-acid chain; its full sequence is Adenylate kinase (299 aa).

The segment at 1–30 (MATTTTRGARDSPFPAPSEGEIKKELNMKG) is disordered. Residue 85–90 (GAGKGT) participates in ATP binding. Positions 107–136 (ATGDMLREQVSKQTELGKMAKKIMDQGGLV) are NMP. AMP is bound by residues Thr108, Arg113, 134–136 (GLV), 163–166 (GFPR), and Gln170. Positions 204-241 (GRLVHPASGRSYHKEFSPPKKPMTDDVTGEPLIQRSDD) are LID. ATP-binding positions include Arg205 and 214–215 (SY). The segment at 212–237 (GRSYHKEFSPPKKPMTDDVTGEPLIQ) is disordered. Residues 215–227 (YHKEFSPPKKPMT) are compositionally biased toward basic and acidic residues. Arg238 and Arg249 together coordinate AMP. ATP is bound at residue Gln277.

The protein belongs to the adenylate kinase family. AK2 subfamily. Monomer.

The protein localises to the cytoplasm. It localises to the cytosol. It is found in the mitochondrion intermembrane space. The catalysed reaction is AMP + ATP = 2 ADP. Functionally, catalyzes the reversible transfer of the terminal phosphate group between ATP and AMP. Plays an important role in cellular energy homeostasis and in adenine nucleotide metabolism. Adenylate kinase activity is critical for regulation of the phosphate utilization and the AMP de novo biosynthesis pathways. This chain is Adenylate kinase, found in Mycosarcoma maydis (Corn smut fungus).